A 273-amino-acid polypeptide reads, in one-letter code: Ribosomal RNA small subunit methyltransferase A (273 aa).

Residues asparagine 19, leucine 21, glycine 46, glutamate 67, aspartate 92, and asparagine 113 each contribute to the S-adenosyl-L-methionine site.

This sequence belongs to the class I-like SAM-binding methyltransferase superfamily. rRNA adenine N(6)-methyltransferase family. RsmA subfamily.

Its subcellular location is the cytoplasm. The catalysed reaction is adenosine(1518)/adenosine(1519) in 16S rRNA + 4 S-adenosyl-L-methionine = N(6)-dimethyladenosine(1518)/N(6)-dimethyladenosine(1519) in 16S rRNA + 4 S-adenosyl-L-homocysteine + 4 H(+). Specifically dimethylates two adjacent adenosines (A1518 and A1519) in the loop of a conserved hairpin near the 3'-end of 16S rRNA in the 30S particle. May play a critical role in biogenesis of 30S subunits. This Hahella chejuensis (strain KCTC 2396) protein is Ribosomal RNA small subunit methyltransferase A.